The chain runs to 273 residues: Medium-wave-sensitive opsin 1 (273 aa).

The Extracellular segment spans residues 1–5 (APRWV). The helical transmembrane segment at 6 to 30 (YHLTSAWMVFVVIASVFTNGLVLAA) threads the bilayer. Residues 31 to 42 (TMRFKKLRHPLN) lie on the Cytoplasmic side of the membrane. A helical membrane pass occupies residues 43 to 68 (WILVNLAIADLVETIIASTISVVNQM). Over 69 to 82 (YGYFVLGHPLCVVE) the chain is Extracellular. A disulfide bond links C79 and C156. A helical transmembrane segment spans residues 83–102 (GYTASLCGITGLWSLAIISW). Residues 103–121 (ERWMVVCRPFGNVRFDAKL) are Cytoplasmic-facing. Residues 122–145 (AIAGIAFSWIWAAVWTAPPIFGWS) traverse the membrane as a helical segment. Topologically, residues 146–171 (RYWPHGLKTSCGPDVFSGSSYPGVQS) are extracellular. The helical transmembrane segment at 172–199 (YMIVLMITCCFIPLSVIVLCYLQVWLAI) threads the bilayer. The Cytoplasmic portion of the chain corresponds to 200-221 (RAVAKQQKESESTQKAEKEVTR). Residues 222–245 (MVMVMIFAFCLCWGPYAFFACFAA) traverse the membrane as a helical segment. The Extracellular segment spans residues 246 to 253 (AHPGYAFH). The helical transmembrane segment at 254–273 (PLVAALPAYFAKSATIYNPI) threads the bilayer. The residue at position 265 (K265) is an N6-(retinylidene)lysine.

The protein belongs to the G-protein coupled receptor 1 family. Opsin subfamily. As to quaternary structure, monomer. Homodimer. Homotetramer. In terms of processing, O-glycosylated. Post-translationally, phosphorylated on some or all of the serine and threonine residues present in the C-terminal region. In terms of tissue distribution, the three color pigments are found in the cone photoreceptor cells.

The protein localises to the membrane. Its function is as follows. Visual pigments are the light-absorbing molecules that mediate vision. They consist of an apoprotein, opsin, covalently linked to cis-retinal. The sequence is that of Medium-wave-sensitive opsin 1 (OPN1MW) from Odocoileus virginianus virginianus (Virginia white-tailed deer).